The sequence spans 618 residues: Glutamine--fructose-6-phosphate aminotransferase [isomerizing] (618 aa).

Cys-2 acts as the Nucleophile; for GATase activity in catalysis. The region spanning 2–226 is the Glutamine amidotransferase type-2 domain; that stretch reads CGIVGYAGRN…DFETAVLTPD (225 aa). The segment at 72-91 is disordered; it reads WATHGRPSTENAHPHNSGGN. SIS domains are found at residues 295-434 and 467-608; these read NDDE…VRGK and CAEN…IDKP. Lys-613 (for Fru-6P isomerization activity) is an active-site residue.

As to quaternary structure, homodimer.

It localises to the cytoplasm. It carries out the reaction D-fructose 6-phosphate + L-glutamine = D-glucosamine 6-phosphate + L-glutamate. Functionally, catalyzes the first step in hexosamine metabolism, converting fructose-6P into glucosamine-6P using glutamine as a nitrogen source. The protein is Glutamine--fructose-6-phosphate aminotransferase [isomerizing] of Methanosarcina mazei (strain ATCC BAA-159 / DSM 3647 / Goe1 / Go1 / JCM 11833 / OCM 88) (Methanosarcina frisia).